A 318-amino-acid chain; its full sequence is Apo-salmochelin esterase (318 aa).

The helical transmembrane segment at 13–32 threads the bilayer; sequence KAIFFHLSCLTLICSAQVYA. Active-site residues include Ser189 and His287.

Belongs to the esterase D family. Monomer.

The protein resides in the cell inner membrane. The enzyme catalyses enterobactin + H2O = N-(2,3-dihydroxybenzoyl)-L-serine trimer. It carries out the reaction monoglucosyl-enterobactin + H2O = [N-(2,3-dihydroxybenzoyl)-L-seryl]2-N-(C-5-[deoxy-beta-D-glucosyl]-2,3-dihydroxybenzoyl)-L-serine + H(+). The catalysed reaction is diglucosyl-enterobactin + H2O = N-(2,3-dihydroxybenzoyl)-L-seryl-[N-(C-5-[deoxy-beta-D-glucosyl]-2,3-dihydroxybenzoyl)-L-serine]2 + H(+). It catalyses the reaction triglucosyl-enterobactin + H2O = [N-(C-5-[deoxy-beta-D-glucosyl]-2,3-dihydroxybenzoyl)-L-serine]3 + H(+). Catalyzes the hydrolysis of both the apo and Fe3(+)-bound forms of enterobactin (Ent), monoglucosyl-C-Ent (MGE), diglucosyl-C-Ent (DGE) and triglucosyl-C-Ent (TGE). It prefers apo siderophores as substrates and hydrolyzes the Fe3(+)-bound siderophores very inefficiently. Tends to hydrolyze the trilactone just once to produce linearized trimers. May hydrolyze and linearize some or all of apo enterobactins while they are being exported. The sequence is that of Apo-salmochelin esterase from Escherichia coli O6:H1 (strain CFT073 / ATCC 700928 / UPEC).